The sequence spans 73 residues: Sodium channel neurotoxin MeuNaTxalpha-13 (73 aa).

Positions 1–5 (TGVES) are cleaved as a signal peptide. One can recognise an LCN-type CS-alpha/beta domain in the interval 7-71 (RDAYIAKPHN…VPIRIPGKCH (65 aa)). 4 disulfides stabilise this stretch: Cys-17–Cys-70, Cys-21–Cys-43, Cys-29–Cys-53, and Cys-33–Cys-55. The propeptide at 72–73 (RR) is removed by a carboxypeptidase.

This sequence belongs to the long (4 C-C) scorpion toxin superfamily. Sodium channel inhibitor family. Alpha subfamily. As to expression, expressed by the venom gland.

Its subcellular location is the secreted. Functionally, alpha toxins bind voltage-independently at site-3 of sodium channels (Nav) and inhibit the inactivation of the activated channels, thereby blocking neuronal transmission. This chain is Sodium channel neurotoxin MeuNaTxalpha-13, found in Mesobuthus eupeus (Lesser Asian scorpion).